Consider the following 413-residue polypeptide: Phosphopentomutase (413 aa).

Asp-11, Asp-306, His-311, Asp-347, His-348, and His-359 together coordinate Mn(2+).

Belongs to the phosphopentomutase family. Mn(2+) serves as cofactor.

Its subcellular location is the cytoplasm. It carries out the reaction 2-deoxy-alpha-D-ribose 1-phosphate = 2-deoxy-D-ribose 5-phosphate. The catalysed reaction is alpha-D-ribose 1-phosphate = D-ribose 5-phosphate. Its pathway is carbohydrate degradation; 2-deoxy-D-ribose 1-phosphate degradation; D-glyceraldehyde 3-phosphate and acetaldehyde from 2-deoxy-alpha-D-ribose 1-phosphate: step 1/2. Its function is as follows. Isomerase that catalyzes the conversion of deoxy-ribose 1-phosphate (dRib-1-P) and ribose 1-phosphate (Rib-1-P) to deoxy-ribose 5-phosphate (dRib-5-P) and ribose 5-phosphate (Rib-5-P), respectively. This Helicobacter pylori (strain P12) protein is Phosphopentomutase.